We begin with the raw amino-acid sequence, 80 residues long: Metallothionein-like protein type 2, MT2-4/MT2-25 (80 aa).

Belongs to the metallothionein superfamily. Type 15 family.

Functionally, metallothioneins have a high content of cysteine residues that bind various heavy metals. The chain is Metallothionein-like protein type 2, MT2-4/MT2-25 from Brassica juncea (Indian mustard).